Here is a 273-residue protein sequence, read N- to C-terminus: Dermonecrotic toxin LdSicTox-alphaIB3aiii (273 aa).

Residue His-5 is part of the active site. Mg(2+)-binding residues include Glu-25 and Asp-27. The active-site Nucleophile is the His-41. Intrachain disulfides connect Cys-45/Cys-51 and Cys-47/Cys-190. A Mg(2+)-binding site is contributed by Asp-85.

It belongs to the arthropod phospholipase D family. Class II subfamily. It depends on Mg(2+) as a cofactor. Expressed by the venom gland.

It is found in the secreted. The catalysed reaction is an N-(acyl)-sphingosylphosphocholine = an N-(acyl)-sphingosyl-1,3-cyclic phosphate + choline. It catalyses the reaction an N-(acyl)-sphingosylphosphoethanolamine = an N-(acyl)-sphingosyl-1,3-cyclic phosphate + ethanolamine. It carries out the reaction a 1-acyl-sn-glycero-3-phosphocholine = a 1-acyl-sn-glycero-2,3-cyclic phosphate + choline. The enzyme catalyses a 1-acyl-sn-glycero-3-phosphoethanolamine = a 1-acyl-sn-glycero-2,3-cyclic phosphate + ethanolamine. In terms of biological role, dermonecrotic toxins cleave the phosphodiester linkage between the phosphate and headgroup of certain phospholipids (sphingolipid and lysolipid substrates), forming an alcohol (often choline) and a cyclic phosphate. This toxin acts on sphingomyelin (SM). It may also act on ceramide phosphoethanolamine (CPE), lysophosphatidylcholine (LPC) and lysophosphatidylethanolamine (LPE), but not on lysophosphatidylserine (LPS), and lysophosphatidylglycerol (LPG). It acts by transphosphatidylation, releasing exclusively cyclic phosphate products as second products. Induces dermonecrosis, hemolysis, increased vascular permeability, edema, inflammatory response, and platelet aggregation. In Loxosceles deserta (Desert recluse spider), this protein is Dermonecrotic toxin LdSicTox-alphaIB3aiii.